The sequence spans 343 residues: Anthranilate 1,2-dioxygenase electron transfer component (343 aa).

The 94-residue stretch at 3–96 (HSVALNFADG…NAAFYFDHHS (94 aa)) folds into the 2Fe-2S ferredoxin-type domain. Residues Cys-40, Cys-45, Cys-48, and Cys-80 each coordinate [2Fe-2S] cluster. The interval 98 to 338 (ICNAGETLKI…HIYSEKFLQS (241 aa)) is ferredoxin-reductase. The FAD-binding FR-type domain maps to 103 to 206 (ETLKIATVVT…EAPLGSFYLR (104 aa)).

The protein belongs to the bacterial ring-hydroxylating dioxygenase ferredoxin reductase family. In terms of assembly, monomer. It is part of the anthranilate dioxygenase two component enzyme system. The other component is an oxygenase component consisting of 3 large (AntA) and 3 small (AntB) subunits. FAD is required as a cofactor. The cofactor is [2Fe-2S] cluster.

It catalyses the reaction 2 reduced [2Fe-2S]-[ferredoxin] + NAD(+) + H(+) = 2 oxidized [2Fe-2S]-[ferredoxin] + NADH. Its pathway is aromatic compound metabolism; anthranilate degradation via hydroxylation; catechol from anthranilate: step 1/1. Its function is as follows. Electron transfer component of anthranilate 1,2-dioxygenase system. This chain is Anthranilate 1,2-dioxygenase electron transfer component, found in Acinetobacter baylyi (strain ATCC 33305 / BD413 / ADP1).